The following is a 550-amino-acid chain: Luciferin 4-monooxygenase (550 aa).

The short motif at 548–550 (SKL) is the Microbody targeting signal element.

It belongs to the ATP-dependent AMP-binding enzyme family. It depends on Mg(2+) as a cofactor.

It is found in the peroxisome. It catalyses the reaction firefly D-luciferin + ATP + O2 = firefly oxyluciferin + hnu + AMP + CO2 + diphosphate. Its function is as follows. Produces green light with a wavelength of 562 nm. The chain is Luciferin 4-monooxygenase from Photinus pyralis (Common eastern firefly).